A 167-amino-acid polypeptide reads, in one-letter code: Translationally-controlled tumor protein homolog (167 aa).

The 167-residue stretch at 1-167 folds into the TCTP domain; that stretch reads MIIYKDIFSG…WKHGIDEEKI (167 aa).

The protein belongs to the TCTP family.

The protein localises to the cytoplasm. It is found in the cytoskeleton. Its function is as follows. Involved in protein synthesis. Involved in microtubule stabilization. In Candida glabrata (strain ATCC 2001 / BCRC 20586 / JCM 3761 / NBRC 0622 / NRRL Y-65 / CBS 138) (Yeast), this protein is Translationally-controlled tumor protein homolog.